A 499-amino-acid polypeptide reads, in one-letter code: MIEPQNNKNINNNIYNNNNNNFKMNQDENQLILNSKQLLEKIKISKKKNPQLKFIRVCWIDISNKIRTKAINIDWILNHEPKLIHVSITNVCMSLLCFEDSVTIEALKSENFGEAFLIPITTTKLNILPYCPSHIQIFGEFFYLDNESKKLKPWLLCPRNSLQRAIDRLKNKFGISLKGSFEEEFYLIKKGDNNNSSVASLLNSIEKLDHGTFANYHSLDCYGDILEKITNALEEQGLPIEQLLSESGSGQFEITIDYTDIMEACDRHIIVRQTINSIASYNGYIATFIPKPFDGLVGSGCHAHLSLWDTNDSNLTPDANGECGLSLVNQFFIGGLLKHSKSLTALFNTTPNSYKRLKPFYWSGCNVSWGLDNKESFIRIPSSPFSATDGCSNFEIKTIDHTSNPYLAMAGIIHAGFDGIENSIAPPPPTSLFDQSVLNNQLIPSNFEDAIQSLKENHYLCENIGNDISNAFIHVKLAENKILKELSDDDQILKLLELF.

Positions 50–146 (PQLKFIRVCW…IFGEFFYLDN (97 aa)) constitute a GS beta-grasp domain. Positions 158–499 (PRNSLQRAID…DQILKLLELF (342 aa)) constitute a GS catalytic domain.

Belongs to the glutamine synthetase family.

It catalyses the reaction L-glutamate + NH4(+) + ATP = L-glutamine + ADP + phosphate + H(+). The chain is Type-1 glutamine synthetase 1 (glnA1) from Dictyostelium discoideum (Social amoeba).